The sequence spans 491 residues: Probable cytosol aminopeptidase (491 aa).

Residues lysine 261 and aspartate 266 each coordinate Mn(2+). Residue lysine 273 is part of the active site. Positions 285, 344, and 346 each coordinate Mn(2+). Arginine 348 is a catalytic residue.

It belongs to the peptidase M17 family. Requires Mn(2+) as cofactor.

It localises to the cytoplasm. The catalysed reaction is Release of an N-terminal amino acid, Xaa-|-Yaa-, in which Xaa is preferably Leu, but may be other amino acids including Pro although not Arg or Lys, and Yaa may be Pro. Amino acid amides and methyl esters are also readily hydrolyzed, but rates on arylamides are exceedingly low.. It carries out the reaction Release of an N-terminal amino acid, preferentially leucine, but not glutamic or aspartic acids.. Its function is as follows. Presumably involved in the processing and regular turnover of intracellular proteins. Catalyzes the removal of unsubstituted N-terminal amino acids from various peptides. This Picosynechococcus sp. (strain ATCC 27264 / PCC 7002 / PR-6) (Agmenellum quadruplicatum) protein is Probable cytosol aminopeptidase.